The sequence spans 62 residues: Photosystem II reaction center protein Z (62 aa).

The next 2 membrane-spanning stretches (helical) occupy residues Ala8–Ala28 and Phe41–Ile61.

It belongs to the PsbZ family. PSII is composed of 1 copy each of membrane proteins PsbA, PsbB, PsbC, PsbD, PsbE, PsbF, PsbH, PsbI, PsbJ, PsbK, PsbL, PsbM, PsbT, PsbY, PsbZ, Psb30/Ycf12, at least 3 peripheral proteins of the oxygen-evolving complex and a large number of cofactors. It forms dimeric complexes.

The protein resides in the plastid. The protein localises to the chloroplast thylakoid membrane. In terms of biological role, may control the interaction of photosystem II (PSII) cores with the light-harvesting antenna, regulates electron flow through the 2 photosystem reaction centers. PSII is a light-driven water plastoquinone oxidoreductase, using light energy to abstract electrons from H(2)O, generating a proton gradient subsequently used for ATP formation. The protein is Photosystem II reaction center protein Z of Anthoceros angustus (Hornwort).